The chain runs to 437 residues: Ribosomal protein uS12 methylthiotransferase RimO (437 aa).

In terms of domain architecture, MTTase N-terminal spans 3–114 (ATIAVTHLGC…IVEVVERSRT (112 aa)). Positions 12, 48, 77, 152, 156, and 159 each coordinate [4Fe-4S] cluster. In terms of domain architecture, Radical SAM core spans 138–367 (TTTEAVAYLK…MRLQQTISQR (230 aa)). The region spanning 370–436 (ASQVGRVVPV…PYDLCGEVFQ (67 aa)) is the TRAM domain.

Belongs to the methylthiotransferase family. RimO subfamily. [4Fe-4S] cluster is required as a cofactor.

The protein localises to the cytoplasm. The enzyme catalyses L-aspartate(89)-[ribosomal protein uS12]-hydrogen + (sulfur carrier)-SH + AH2 + 2 S-adenosyl-L-methionine = 3-methylsulfanyl-L-aspartate(89)-[ribosomal protein uS12]-hydrogen + (sulfur carrier)-H + 5'-deoxyadenosine + L-methionine + A + S-adenosyl-L-homocysteine + 2 H(+). Catalyzes the methylthiolation of an aspartic acid residue of ribosomal protein uS12. This Gloeobacter violaceus (strain ATCC 29082 / PCC 7421) protein is Ribosomal protein uS12 methylthiotransferase RimO.